Consider the following 591-residue polypeptide: L-fucose isomerase (591 aa).

Residues Glu-337 and Asp-361 each act as proton acceptor in the active site. Glu-337, Asp-361, and His-528 together coordinate Mn(2+).

The protein belongs to the L-fucose isomerase family. In terms of assembly, homohexamer. It depends on Mn(2+) as a cofactor.

It is found in the cytoplasm. It catalyses the reaction L-fucose = L-fuculose. The protein operates within carbohydrate degradation; L-fucose degradation; L-lactaldehyde and glycerone phosphate from L-fucose: step 1/3. Converts the aldose L-fucose into the corresponding ketose L-fuculose. This Salmonella typhi protein is L-fucose isomerase.